The primary structure comprises 1406 residues: DNA-directed RNA polymerase subunit beta' (1406 aa).

Residues Cys-72, Cys-74, Cys-87, and Cys-90 each coordinate Zn(2+). Mg(2+)-binding residues include Asp-462, Asp-464, and Asp-466. Zn(2+) is bound by residues Cys-816, Cys-891, Cys-898, and Cys-901.

The protein belongs to the RNA polymerase beta' chain family. In terms of assembly, the RNAP catalytic core consists of 2 alpha, 1 beta, 1 beta' and 1 omega subunit. When a sigma factor is associated with the core the holoenzyme is formed, which can initiate transcription. Mg(2+) serves as cofactor. Zn(2+) is required as a cofactor.

It carries out the reaction RNA(n) + a ribonucleoside 5'-triphosphate = RNA(n+1) + diphosphate. DNA-dependent RNA polymerase catalyzes the transcription of DNA into RNA using the four ribonucleoside triphosphates as substrates. This is DNA-directed RNA polymerase subunit beta' from Psychrobacter arcticus (strain DSM 17307 / VKM B-2377 / 273-4).